The chain runs to 453 residues: Chromosomal replication initiator protein DnaA (453 aa).

The tract at residues 1–78 (MTENEQLFWN…FEIFNAEITA (78 aa)) is domain I, interacts with DnaA modulators. The domain II stretch occupies residues 78 to 112 (ANYVSNDLHLQETSFSNYQQSSNEVNTLPIRKIDS). The tract at residues 113-331 (NLKEKYTFAN…GALKNISLVA (219 aa)) is domain III, AAA+ region. Residues Gly-157, Gly-159, Lys-160, and Thr-161 each coordinate ATP. Residues 332–453 (DFKHAKTITV…EIETIKNKIR (122 aa)) form a domain IV, binds dsDNA region.

Belongs to the DnaA family. Oligomerizes as a right-handed, spiral filament on DNA at oriC.

The protein resides in the cytoplasm. In terms of biological role, plays an essential role in the initiation and regulation of chromosomal replication. ATP-DnaA binds to the origin of replication (oriC) to initiate formation of the DNA replication initiation complex once per cell cycle. Binds the DnaA box (a 9 base pair repeat at the origin) and separates the double-stranded (ds)DNA. Forms a right-handed helical filament on oriC DNA; dsDNA binds to the exterior of the filament while single-stranded (ss)DNA is stabiized in the filament's interior. The ATP-DnaA-oriC complex binds and stabilizes one strand of the AT-rich DNA unwinding element (DUE), permitting loading of DNA polymerase. After initiation quickly degrades to an ADP-DnaA complex that is not apt for DNA replication. Binds acidic phospholipids. The chain is Chromosomal replication initiator protein DnaA from Streptococcus agalactiae serotype Ia (strain ATCC 27591 / A909 / CDC SS700).